The following is a 1141-amino-acid chain: Tetratricopeptide repeat protein 17 (1141 aa).

A TPR 1 repeat occupies 295-328; sequence FTSYYTLGNIYAMLGEYNHSVLCYDHALQARPGF. Positions 340 to 382 form a coiled coil; it reads CQQKLEQKLEAQHRSLQRTLNELKEYQKQHDHYLRQQEILEKH. 5 TPR repeats span residues 619–652, 689–722, 1014–1048, 1051–1084, and 1085–1118; these read WLIL…APLQ, PLTF…TTKC, SWVL…APHQ, DVPL…APHF, and AVNH…QPEF.

It belongs to the TTC17 family. In terms of assembly, interacts with CATIP. Expressed in germ cells as well as in somatic cells of the testis (at protein level).

The protein localises to the cytoplasm. The protein resides in the cell membrane. Its subcellular location is the cytoskeleton. Plays a role in primary ciliogenesis by modulating actin polymerization. The sequence is that of Tetratricopeptide repeat protein 17 (TTC17) from Homo sapiens (Human).